The chain runs to 71 residues: Vitellogenin-B2 (71 aa).

Positions 1 to 15 are cleaved as a signal peptide; that stretch reads MRGIILALLLALAGC. Residues 24 to 71 form the Vitellogenin domain; sequence FSESKTYVYNYEGIILNGIPENGLARSGIKLNCKVELSGYAQRSYMLK.

Produced by the liver, secreted into the blood and then sequestered by receptor mediated endocytosis into growing oocytes, where it is generally cleaved, giving rise to the respective yolk components.

Precursor of the major egg-yolk proteins that are sources of nutrients during early development of oviparous organisms. The protein is Vitellogenin-B2 of Xenopus laevis (African clawed frog).